Here is a 527-residue protein sequence, read N- to C-terminus: V-set and immunoglobulin domain-containing protein 10 (527 aa).

An N-terminal signal peptide occupies residues 1 to 13 (MWTRRWIQFLVLC). Ig-like C2-type domains are found at residues 14–111 (LHLW…LKVS), 123–212 (PTRT…RQLL), 216–306 (PPIT…CQIQ), and 310–399 (PLLE…KEIN). Residues 23–409 (YLGVFRGDVN…VWLTVNKPHN (387 aa)) lie on the Extracellular side of the membrane. 16 N-linked (GlcNAc...) asparagine glycosylation sites follow: N32, N41, N52, N64, N74, N90, N129, N139, N191, N206, N226, N260, N276, N325, N346, and N375. A disulfide bridge links C144 with C194. C238 and C288 are joined by a disulfide. The cysteines at positions 330 and 387 are disulfide-linked. The chain crosses the membrane as a helical span at residues 410-430 (IVGLVTALLLLFLLVVAIITG). The Cytoplasmic portion of the chain corresponds to 431–527 (TVLYCDPQIY…TGEENQNEEI (97 aa)). Positions 501 to 527 (RPPESTSSDLFSEVSDDTGEENQNEEI) are disordered. Positions 514 to 527 (VSDDTGEENQNEEI) are enriched in acidic residues.

Its subcellular location is the membrane. This is V-set and immunoglobulin domain-containing protein 10 (vsig10) from Xenopus laevis (African clawed frog).